The primary structure comprises 145 residues: Hemoglobin subunit beta-A (145 aa).

The 145-residue stretch at 1–145 (MLTAEEKAAV…VANALAHRYH (145 aa)) folds into the Globin domain. Heme b contacts are provided by histidine 62 and histidine 91.

It belongs to the globin family. In terms of assembly, heterotetramer of two alpha chains and two beta chains. In terms of tissue distribution, red blood cells.

In terms of biological role, involved in oxygen transport from the lung to the various peripheral tissues. In Capra hircus (Goat), this protein is Hemoglobin subunit beta-A.